We begin with the raw amino-acid sequence, 479 residues long: U2 small nuclear ribonucleoprotein auxiliary factor 35 kDa subunit-related protein 1 (479 aa).

Residues 1 to 63 (MAALEKMTFP…EDTFIEEQQL (63 aa)) are disordered. Positions 20-37 (SHKKYRAALKKEKRKKRR) are enriched in basic residues. The span at 50 to 63 (QEEEEDTFIEEQQL) shows a compositional bias: acidic residues. K67 participates in a covalent cross-link: Glycyl lysine isopeptide (Lys-Gly) (interchain with G-Cter in SUMO2). The C3H1-type 1 zinc finger occupies 171 to 199 (EKDRANCPFYSKTGACRFGDRCSRKHNFP). The 107-residue stretch at 203–309 (PTLLIKSMFT…RQLQCEFCPV (107 aa)) folds into the RRM domain. The C3H1-type 2 zinc finger occupies 311–338 (RWKMAICGLFEIQQCPRGKHCNFLHVFR). A Phosphoserine modification is found at S354. The interval 356-479 (DQTGSSFGKN…DRTVQSPQSK (124 aa)) is disordered. Composition is skewed to basic and acidic residues over residues 365–379 (NSER…DHYY) and 388–403 (PSPD…SERK). S389 bears the Phosphoserine mark. 2 stretches are compositionally biased toward basic residues: residues 404-417 (KSSH…KRTS) and 442-451 (SQSRRSHRSR).

Its subcellular location is the nucleus. The protein is U2 small nuclear ribonucleoprotein auxiliary factor 35 kDa subunit-related protein 1 of Homo sapiens (Human).